Here is a 272-residue protein sequence, read N- to C-terminus: 3-methyl-2-oxobutanoate hydroxymethyltransferase (272 aa).

Mg(2+)-binding residues include aspartate 43 and aspartate 82. 3-methyl-2-oxobutanoate contacts are provided by residues 43–44, aspartate 82, and lysine 112; that span reads DS. Mg(2+) is bound at residue glutamate 114. Glutamate 179 serves as the catalytic Proton acceptor.

The protein belongs to the PanB family. As to quaternary structure, homodecamer; pentamer of dimers. Mg(2+) serves as cofactor.

It is found in the cytoplasm. The catalysed reaction is 3-methyl-2-oxobutanoate + (6R)-5,10-methylene-5,6,7,8-tetrahydrofolate + H2O = 2-dehydropantoate + (6S)-5,6,7,8-tetrahydrofolate. The protein operates within cofactor biosynthesis; (R)-pantothenate biosynthesis; (R)-pantoate from 3-methyl-2-oxobutanoate: step 1/2. Catalyzes the reversible reaction in which hydroxymethyl group from 5,10-methylenetetrahydrofolate is transferred onto alpha-ketoisovalerate to form ketopantoate. The polypeptide is 3-methyl-2-oxobutanoate hydroxymethyltransferase (Staphylococcus aureus (strain Mu3 / ATCC 700698)).